We begin with the raw amino-acid sequence, 381 residues long: MTQAAPVTFSTVRENYFGPPAEMQALRHKAPVTRTAFADGRPGWLVTGYSAARAVLSDSRFTARGEREHPAVPRAATLEDERCRRLIAGQFTARRMRQLTGRTERIVREHLDAMEHMGSPADLVEHFALPVPSLVIAELLGVPPPDREHFQHDTLRWGGFGRSTEEVTEAFVSLGGQLQRLVRLKRTEPGDDLLSGLIAADPALTDEELASIAFLLLVAGHGTTAHQIALGAFLLLEHPDQLAALRADPALTESAVEELLRHLSVVHHGPTRAALQDADIEGTPVKAGEVVVVSLGAANRDPARFERPDAVDVTREDTGHLAFGHGMHQCLGRQLARIELRVALTALLERFPHLRLACPAAEIPLRHDMQVYGADRLPVAW.

Cysteine 330 serves as a coordination point for heme.

The protein belongs to the cytochrome P450 family. Heme is required as a cofactor.

It is found in the cytoplasm. The polypeptide is Cytochrome P450 105C1 (cyp105C1) (Streptomyces sp).